A 349-amino-acid chain; its full sequence is Hydroxymethylglutaryl-CoA synthase (349 aa).

Residues Asp30 and Ala31 each coordinate (3S)-3-hydroxy-3-methylglutaryl-CoA. The active-site Proton donor/acceptor is Glu82. 2 residues coordinate (3S)-3-hydroxy-3-methylglutaryl-CoA: Cys114 and Thr155. Cys114 functions as the Acyl-thioester intermediate in the catalytic mechanism. Arg203 contributes to the CoA binding site. Residues Thr205 and His238 each coordinate (3S)-3-hydroxy-3-methylglutaryl-CoA. His238 acts as the Proton donor/acceptor in catalysis. Lys243 provides a ligand contact to CoA. 2 residues coordinate (3S)-3-hydroxy-3-methylglutaryl-CoA: Asn270 and Ser300.

This sequence belongs to the thiolase-like superfamily. Archaeal HMG-CoA synthase family. Interacts with acetoacetyl-CoA thiolase that catalyzes the precedent step in the pathway and with a DUF35 protein. The acetoacetyl-CoA thiolase/HMG-CoA synthase complex channels the intermediate via a fused CoA-binding site, which allows for efficient coupling of the endergonic thiolase reaction with the exergonic HMGCS reaction.

The enzyme catalyses acetoacetyl-CoA + acetyl-CoA + H2O = (3S)-3-hydroxy-3-methylglutaryl-CoA + CoA + H(+). The protein operates within metabolic intermediate biosynthesis; (R)-mevalonate biosynthesis; (R)-mevalonate from acetyl-CoA: step 2/3. Catalyzes the condensation of acetyl-CoA with acetoacetyl-CoA to form 3-hydroxy-3-methylglutaryl-CoA (HMG-CoA). Functions in the mevalonate (MVA) pathway leading to isopentenyl diphosphate (IPP), a key precursor for the biosynthesis of isoprenoid compounds that are building blocks of archaeal membrane lipids. This Methanococcus maripaludis (strain DSM 14266 / JCM 13030 / NBRC 101832 / S2 / LL) protein is Hydroxymethylglutaryl-CoA synthase.